The sequence spans 618 residues: Dihydroxy-acid dehydratase (618 aa).

Asp81 contributes to the Mg(2+) binding site. Residue Cys122 participates in [2Fe-2S] cluster binding. Mg(2+)-binding residues include Asp123 and Lys124. An N6-carboxylysine modification is found at Lys124. Residue Cys197 coordinates [2Fe-2S] cluster. Glu493 lines the Mg(2+) pocket. The active-site Proton acceptor is the Ser519.

It belongs to the IlvD/Edd family. As to quaternary structure, homodimer. [2Fe-2S] cluster is required as a cofactor. Mg(2+) serves as cofactor.

It catalyses the reaction (2R)-2,3-dihydroxy-3-methylbutanoate = 3-methyl-2-oxobutanoate + H2O. The enzyme catalyses (2R,3R)-2,3-dihydroxy-3-methylpentanoate = (S)-3-methyl-2-oxopentanoate + H2O. It participates in amino-acid biosynthesis; L-isoleucine biosynthesis; L-isoleucine from 2-oxobutanoate: step 3/4. Its pathway is amino-acid biosynthesis; L-valine biosynthesis; L-valine from pyruvate: step 3/4. Functionally, functions in the biosynthesis of branched-chain amino acids. Catalyzes the dehydration of (2R,3R)-2,3-dihydroxy-3-methylpentanoate (2,3-dihydroxy-3-methylvalerate) into 2-oxo-3-methylpentanoate (2-oxo-3-methylvalerate) and of (2R)-2,3-dihydroxy-3-methylbutanoate (2,3-dihydroxyisovalerate) into 2-oxo-3-methylbutanoate (2-oxoisovalerate), the penultimate precursor to L-isoleucine and L-valine, respectively. The chain is Dihydroxy-acid dehydratase from Bordetella avium (strain 197N).